A 361-amino-acid chain; its full sequence is RNA 3'-terminal phosphate cyclase (361 aa).

Residues Q109 and 293-297 (HLADQ) contribute to the ATP site. The active-site Tele-AMP-histidine intermediate is the H319.

This sequence belongs to the RNA 3'-terminal cyclase family. Type 1 subfamily.

Its subcellular location is the cytoplasm. The enzyme catalyses a 3'-end 3'-phospho-ribonucleotide-RNA + ATP = a 3'-end 2',3'-cyclophospho-ribonucleotide-RNA + AMP + diphosphate. Catalyzes the conversion of 3'-phosphate to a 2',3'-cyclic phosphodiester at the end of RNA. The mechanism of action of the enzyme occurs in 3 steps: (A) adenylation of the enzyme by ATP; (B) transfer of adenylate to an RNA-N3'P to produce RNA-N3'PP5'A; (C) and attack of the adjacent 2'-hydroxyl on the 3'-phosphorus in the diester linkage to produce the cyclic end product. The biological role of this enzyme is unknown but it is likely to function in some aspects of cellular RNA processing. The chain is RNA 3'-terminal phosphate cyclase from Methylococcus capsulatus (strain ATCC 33009 / NCIMB 11132 / Bath).